The primary structure comprises 952 residues: Substrate-adhesion molecule (952 aa).

An N-terminal signal peptide occupies residues 1–25; that stretch reads MKSQKIGSMILLIGILLAIFNFAYS. The Extracellular portion of the chain corresponds to 26–527; sequence DDDIERFSIN…TWFFDTNVET (502 aa). Residues N78, N182, N231, N243, and N412 are each glycosylated (N-linked (GlcNAc...) asparagine). An EGF-like domain is found at 438 to 471; that stretch reads EIRRCKDSCNGYGTCNTANYTCVCDSAHMGETCN. Intrachain disulfides connect C442–C452, C446–C459, and C461–C470. N456 carries an N-linked (GlcNAc...) asparagine glycan. Residues 528-548 form a helical membrane-spanning segment; that stretch reads GVIALACIFIAFVGILYIIDI. Residues 549–591 lie on the Cytoplasmic side of the membrane; it reads GTTVPIDIKRAKDYAEENKSGQFPKATHEEASVLWWRDQRSHK. Residues 592-612 traverse the membrane as a helical segment; sequence AWTFMDQFQLISLVSHIGVVF. The Extracellular portion of the chain corresponds to 613 to 678; sequence PSRFISFTEY…GDLYLLPNIL (66 aa). Residues 679-699 traverse the membrane as a helical segment; it reads FWFGLLLGVFLVPLLLAYAII. At 700-722 the chain is on the cytoplasmic side; sequence SFMESLIHWKEVVTNRLIHVLVR. Residues 723-743 traverse the membrane as a helical segment; it reads ILTFGYIGVLIAASFAMVTPL. Residues 744 to 752 are Extracellular-facing; it reads HDYRIIIPG. A helical membrane pass occupies residues 753–773; sequence AIIFVLYGIGLPIAIWFLLAV. Over 774 to 801 the chain is Cytoplasmic; it reads PEARLHNPTFKQRFGCLYVHYKPKTDHR. Residues 802–822 form a helical membrane-spanning segment; it reads FVVFMFIKRFIMAVIIGILSF. The Extracellular portion of the chain corresponds to 823-837; sequence KPMTNYPLTGTDLAV. Residues 838-858 form a helical membrane-spanning segment; sequence PIVQVVVIDIALIGYAVLLFI. Residues 859–868 are Cytoplasmic-facing; it reads RKPYFDHYQL. Residues 869–889 traverse the membrane as a helical segment; it reads WLEYLLTAINIVTVSLSLTHI. Residues 890 to 897 are Extracellular-facing; it reads KSPSAAGE. The helical transmembrane segment at 898 to 918 threads the bilayer; it reads LIACLIQALALVACIAAYVVA. At 919 to 952 the chain is on the cytoplasmic side; sequence WLQMRSSFIKKVKKYLCCCCKSSKSSGEIDLSKK.

It localises to the cell membrane. Functionally, involved in substrate adhesion, myosin-independent cytokinesis, organization of actin cytoskeleton, and phagocytosis. The sequence is that of Substrate-adhesion molecule (sadA) from Dictyostelium discoideum (Social amoeba).